The following is a 457-amino-acid chain: Phosphoglucosamine mutase (457 aa).

Serine 103 (phosphoserine intermediate) is an active-site residue. Mg(2+)-binding residues include serine 103, aspartate 245, aspartate 247, and aspartate 249. A Phosphoserine modification is found at serine 103.

The protein belongs to the phosphohexose mutase family. Mg(2+) is required as a cofactor. In terms of processing, activated by phosphorylation.

The enzyme catalyses alpha-D-glucosamine 1-phosphate = D-glucosamine 6-phosphate. Functionally, catalyzes the conversion of glucosamine-6-phosphate to glucosamine-1-phosphate. This is Phosphoglucosamine mutase from Syntrophotalea carbinolica (strain DSM 2380 / NBRC 103641 / GraBd1) (Pelobacter carbinolicus).